Here is a 118-residue protein sequence, read N- to C-terminus: Small ribosomal subunit protein uS13 (118 aa).

The interval 94–118 (SLPLRGQRTKTNARTRKGPRKPIKK) is disordered.

It belongs to the universal ribosomal protein uS13 family. Part of the 30S ribosomal subunit. Forms a loose heterodimer with protein S19. Forms two bridges to the 50S subunit in the 70S ribosome.

Functionally, located at the top of the head of the 30S subunit, it contacts several helices of the 16S rRNA. In the 70S ribosome it contacts the 23S rRNA (bridge B1a) and protein L5 of the 50S subunit (bridge B1b), connecting the 2 subunits; these bridges are implicated in subunit movement. Contacts the tRNAs in the A and P-sites. The chain is Small ribosomal subunit protein uS13 from Colwellia psychrerythraea (strain 34H / ATCC BAA-681) (Vibrio psychroerythus).